Consider the following 313-residue polypeptide: D-apiose import binding protein (313 aa).

The signal sequence occupies residues 1–26 (MKLTRRLTLAAFASALALGTAMPAFA). D-apiofuranose contacts are provided by residues asparagine 39, 115-116 (DR), 162-164 (DTN), arginine 168, asparagine 218, aspartate 243, and glutamine 263.

The protein belongs to the bacterial solute-binding protein 2 family.

The protein localises to the periplasm. Part of an ABC transporter complex involved in D-apiose import. Binds D-apiose, D-ribose and D-ribulose. This chain is D-apiose import binding protein, found in Rhizobium etli (strain ATCC 51251 / DSM 11541 / JCM 21823 / NBRC 15573 / CFN 42).